The following is a 134-amino-acid chain: uncharacterized protein (134 aa).

The N-terminal stretch at 1 to 37 (MSYIKRDHTALRDIAMKTFLKVVGLAASLSAASVAFS) is a signal peptide.

This is an uncharacterized protein from Coxiella burnetii (strain RSA 493 / Nine Mile phase I).